The sequence spans 344 residues: Uroporphyrinogen decarboxylase (344 aa).

Substrate is bound by residues 23–27 (RQAGR), D73, Y149, T204, and H321.

It belongs to the uroporphyrinogen decarboxylase family. In terms of assembly, homodimer.

Its subcellular location is the cytoplasm. It carries out the reaction uroporphyrinogen III + 4 H(+) = coproporphyrinogen III + 4 CO2. Its pathway is porphyrin-containing compound metabolism; protoporphyrin-IX biosynthesis; coproporphyrinogen-III from 5-aminolevulinate: step 4/4. Functionally, catalyzes the decarboxylation of four acetate groups of uroporphyrinogen-III to yield coproporphyrinogen-III. In Francisella tularensis subsp. novicida (strain U112), this protein is Uroporphyrinogen decarboxylase.